A 210-amino-acid chain; its full sequence is Na(+)-translocating NADH-quinone reductase subunit D (210 aa).

The next 6 helical transmembrane spans lie at 10–30 (VLIG…GVCS), 42–62 (LVMT…ISLI), 72–92 (IIVQ…VLQA), 103–123 (VFVG…AYAM), 131–151 (FMDG…VGFV), and 178–198 (NGLL…IWII).

This sequence belongs to the NqrDE/RnfAE family. Composed of six subunits; NqrA, NqrB, NqrC, NqrD, NqrE and NqrF.

The protein resides in the cell inner membrane. The catalysed reaction is a ubiquinone + n Na(+)(in) + NADH + H(+) = a ubiquinol + n Na(+)(out) + NAD(+). Functionally, NQR complex catalyzes the reduction of ubiquinone-1 to ubiquinol by two successive reactions, coupled with the transport of Na(+) ions from the cytoplasm to the periplasm. NqrA to NqrE are probably involved in the second step, the conversion of ubisemiquinone to ubiquinol. In Shewanella pealeana (strain ATCC 700345 / ANG-SQ1), this protein is Na(+)-translocating NADH-quinone reductase subunit D.